Reading from the N-terminus, the 208-residue chain is Small ribosomal subunit protein eS8 (208 aa).

A disordered region spans residues 1–37 (MGISRDNWHKRRKTGGKRKPYHKKRKYEPGRPAANTK). Positions 8–26 (WHKRRKTGGKRKPYHKKRK) are enriched in basic residues.

This sequence belongs to the eukaryotic ribosomal protein eS8 family. As to quaternary structure, component of the small ribosomal subunit. Identified in a IGF2BP1-dependent mRNP granule complex containing untranslated mRNAs. Part of the small subunit (SSU) processome, composed of more than 70 proteins and the RNA chaperone small nucleolar RNA (snoRNA) U3.

Its subcellular location is the cytoplasm. The protein resides in the membrane. The protein localises to the nucleus. It is found in the nucleolus. Functionally, component of the small ribosomal subunit. The ribosome is a large ribonucleoprotein complex responsible for the synthesis of proteins in the cell. Part of the small subunit (SSU) processome, first precursor of the small eukaryotic ribosomal subunit. During the assembly of the SSU processome in the nucleolus, many ribosome biogenesis factors, an RNA chaperone and ribosomal proteins associate with the nascent pre-rRNA and work in concert to generate RNA folding, modifications, rearrangements and cleavage as well as targeted degradation of pre-ribosomal RNA by the RNA exosome. This Xenopus laevis (African clawed frog) protein is Small ribosomal subunit protein eS8 (rps8).